Here is a 600-residue protein sequence, read N- to C-terminus: PWWP domain-containing protein 2B (600 aa).

Disordered stretches follow at residues 81–115 (ETGP…PVPA), 143–171 (WVPQ…LILS), 186–350 (KSTV…LGDG), 366–408 (GCPR…PQGK), and 426–477 (DCTS…TVPP). The segment covering 104-115 (EPPPPLIPPVPA) has biased composition (pro residues). Residues 151–160 (TIKRTRRRLS) show a composition bias toward basic residues. The segment covering 187–200 (STVSPQEASPSPLN) has biased composition (polar residues). 2 positions are modified to phosphoserine: Ser190 and Ser210. Residues 239–252 (EKREEDRVAGERVP) show a composition bias toward basic and acidic residues. Residue Ser254 is modified to Phosphoserine. The segment covering 286–297 (PQQSLQNGSQDS) has biased composition (polar residues). The span at 298 to 309 (EVSRDVEPRGGG) shows a compositional bias: basic and acidic residues. Pro residues predominate over residues 328–339 (PVPPISDLPPPK). Over residues 381–395 (DGSSHGLEDLSSGSS) the composition is skewed to low complexity. The span at 443–456 (SSGSEVTSPDTGDL) shows a compositional bias: polar residues. Ser457 carries the post-translational modification Phosphoserine. Positions 457 to 468 (SSGDSASVPSSS) are enriched in low complexity. In terms of domain architecture, PWWP spans 500–560 (VGDIVWGKIH…ISKLSPFSEF (61 aa)).

Component of a MTA1-specific subcomplex of the NuRD complex composed of PWWP2B, MTA1 and HDAC1 but does not contain CHD4 and MBD3. Interacts with MTA1, MTA2, MTA3, HDAC1, HDAC2, RBBP4, RBBP7, BRCC3 and ZNF516. Does not interact with CHD4 and MBD3. Post-translationally, deubiquitinated by BRCC3; leading to its stabilization. As to expression, expressed in the brown adipose tissue.

The protein resides in the nucleus. Chromatin-binding protein that acts as an adapter between distinct nucleosome components (H3K36me3 or H2A.Z) and chromatin-modifying complexes, contributing to the regulation of the levels of histone acetylation at actively transcribed genes. Competes with CHD4 and MBD3 for interaction with MTA1 to form a NuRD subcomplex, preventing the formation of full NuRD complex (containing CHD4 and MBD3), leading to recruitment of HDACs to gene promoters resulting in turn in the deacetylation of nearby H3K27 and H2A.Z. Plays a role in facilitating transcriptional elongation through regulation of histone acetylation. Negatively regulates brown adipocyte thermogenesis by interacting with and stabilizing HDAC1 at the UCP1 gene promoter, thereby promoting histone deacetylation at the promoter leading to the repression of UCP1 expression. The protein is PWWP domain-containing protein 2B (Pwwp2b) of Mus musculus (Mouse).